A 1341-amino-acid polypeptide reads, in one-letter code: Subtilisin-like protease 2 (1341 aa).

An N-terminal signal peptide occupies residues 1–18 (MLNIIYVVSLILIKFIFY). The propeptide at 19 to 686 (KECNNNNNYY…KLYNNKYSFL (668 aa)) is inhibition peptide. 2 disordered regions span residues 85–107 (EKKT…EKKK) and 143–171 (ADVS…NYKN). N-linked (GlcNAc...) asparagine glycans are attached at residues Asn165, Asn343, Asn449, Asn453, and Asn492. A disordered region spans residues 415–474 (KKSKKEKENTQQKGGNNPNVDINILNNNNNNNNNNNSNNNSNSMNDEEINYNNNNNNKES). Positions 430-474 (NNPNVDINILNNNNNNNNNNNSNNNSNSMNDEEINYNNNNNNKES) are enriched in low complexity. Residues 499-530 (IYHNKNDNSYKNKKEGTGKNNDNNDPNNNNNK) are disordered. Residues 502-515 (NKNDNSYKNKKEGT) are compositionally biased toward basic and acidic residues. Low complexity predominate over residues 517–530 (KNNDNNDPNNNNNK). N-linked (GlcNAc...) asparagine glycosylation is found at Asn550, Asn641, and Asn728. Over 687–1136 (NKFLNIEPLI…LYNLYEYDSH (450 aa)) the chain is Extracellular. The Peptidase S8 domain maps to 726-1019 (TWNLSIIRVF…DSLVNAEGAV (294 aa)). Catalysis depends on charge relay system residues Asp754 and His797. Residues Asn820, Asn856, Asn892, and Asn950 are each glycosylated (N-linked (GlcNAc...) asparagine). Residue Ser960 is the Charge relay system of the active site. 2 N-linked (GlcNAc...) asparagine glycosylation sites follow: Asn1009 and Asn1105. Residues 1137–1157 (YLLASVILFFLALLSIFVGMI) form a helical membrane-spanning segment. Residues 1158 to 1341 (YMKSRKHSDK…MNQLDDMFMK (184 aa)) are Cytoplasmic-facing.

It belongs to the peptidase S8 family. Post-translationally, proteolytically cleaved at the N-terminus to generate a 74kDa intermediate which is further processed into a 72kDa form. The first maturation cleavage is autocatalytic, occurs in the ER and is necessary for the subsequent SUB2 trafficking to the microneme. The second cleavage may be mediated by PMX/plasmepsin X.

It is found in the cell membrane. Its subcellular location is the cytoplasmic vesicle. The protein localises to the secretory vesicle. It localises to the microneme membrane. It catalyses the reaction Hydrolysis of proteins with broad specificity for peptide bonds, and a preference for a large uncharged residue in P1. Hydrolyzes peptide amides.. Activation may be calcium-dependent. Inhibited by the non-covalent interaction with the cleaved propeptide. Serine protease which plays an essential role in the shedding of AMA1, MSP1 and MSP7 from the surface of the invading merozoite; this step is essential for productive invasion and the release of the adhesion between the erythrocyte and the merozoite. May cleave TRAMP/PTTRAMP, thereby shedding TRAMP from the merozoite surface during erythrocyte invasion. In Plasmodium falciparum (isolate 3D7), this protein is Subtilisin-like protease 2.